An 88-amino-acid chain; its full sequence is Kunitz-type U15-theraphotoxin-Hhn1h (88 aa).

The N-terminal stretch at 1 to 27 is a signal peptide; it reads MGTARFLRAVLLLSVLLMVTFPALLSA. Residues 28 to 33 constitute a propeptide that is removed on maturation; it reads EHHDGR. The 49-residue stretch at 37-85 folds into the BPTI/Kunitz inhibitor domain; it reads CRLPSGSGDCLRFFEMWYFDGTTCTKFVYGGYGGNDNRFPTEKACMKRC. 2 cysteine pairs are disulfide-bonded: Cys-37–Cys-85 and Cys-60–Cys-81.

This sequence belongs to the venom Kunitz-type family. 03 (sub-Kunitz) subfamily. In terms of tissue distribution, expressed by the venom gland.

It localises to the secreted. In terms of biological role, serine protease inhibitor that inhibits trypsin at a molar ratio of 1:1. This chain is Kunitz-type U15-theraphotoxin-Hhn1h, found in Cyriopagopus hainanus (Chinese bird spider).